Consider the following 521-residue polypeptide: Ankyrin repeat and death domain-containing protein 1B (521 aa).

ANK repeat units lie at residues Ala-60 to Ala-89, Met-93 to Val-122, His-126 to Ala-155, Glu-159 to Gln-190, Arg-194 to Glu-223, Asp-227 to Glu-256, Leu-260 to Gln-289, Ser-293 to Val-322, Arg-326 to Ile-355, and Gln-359 to Trp-388. The Death domain maps to Thr-420–Lys-508.

This chain is Ankyrin repeat and death domain-containing protein 1B (Ankdd1b), found in Mus musculus (Mouse).